The sequence spans 338 residues: Short-chain dehydrogenase/reductase phmF (338 aa).

Positions 46, 71, 96, and 123 each coordinate NADP(+). Ser177 acts as the Proton donor in catalysis. The NADP(+) site is built by Tyr211 and Lys215. Tyr211 functions as the Proton acceptor in the catalytic mechanism. The active-site Lowers pKa of active site Tyr is the Lys215.

Belongs to the short-chain dehydrogenases/reductases (SDR) family.

It participates in mycotoxin biosynthesis. In terms of biological role, short-chain dehydrogenase/reductase; part of the gene cluster that mediates the biosynthesis of the mycotoxins phomacins, leucine-derived cytochalasans with potent actin polymerization-inhibitory activities and monocot-specific antigerminative activities. The first step in the pathway is catalyzed by the hybrid PKS-NRPS phmA, assisted by the enoyl reductase phmE, that are responsible for fusion of the leucine precursor and the polyketide backbone to produce a 2-pyrrolidone intermediate. The polyketide synthase module (PKS) of phmA is responsible for the synthesis of the polyketide backbone and the downstream nonribosomal peptide synthetase (NRPS) amidates the carboxyl end of the polyketide with the leucine precursor. Because phmA lacks a designated enoylreductase (ER) domain, the required activity is provided the enoyl reductase phmE. Reduction by the hydrolyase phmG, followed by dehydration and intra-molecular Diels-Alder cyclization by the Diels-Alderase phmD then yield the required isoindolone-fused macrocycle. A number of oxidative steps catalyzed by the tailoring cytochrome P450 monooxygenase phmB, the FAD-linked oxidoreductase phmC and the short-chain dehydrogenase/reductase phmF, are further required to afford the final products, phomacin D and phomacin E. The chain is Short-chain dehydrogenase/reductase phmF from Phaeosphaeria nodorum (strain SN15 / ATCC MYA-4574 / FGSC 10173) (Glume blotch fungus).